The sequence spans 238 residues: Glutamine amidotransferase-like protein chyE (238 aa).

Residues 8 to 238 enclose the Glutamine amidotransferase type-1 domain; that stretch reads KIAVLINTPP…LERVLQWLSE (231 aa). C102 functions as the Nucleophile in the catalytic mechanism. Residues H189 and E191 contribute to the active site.

It belongs to the peptidase C26 family.

The protein operates within pigment biosynthesis. Functionally, glutamine amidotransferase-like protein; part of the gene cluster that mediates the biosynthesis of the yellow pigment chrysogine. the NRPS chyA mediates the condensation of anthranilic acid and alanine into the intermediate 2-(2-aminopropanamido)benzoic acid. The remainder of the pathway is highly branched yielding at least 13 chrysogine-related compounds. The malonyl transferase chyE converts 2-(2-aminopropanamido)benzoic acid and 2-(2-aminopropanamido)benzamidine into 2-(2-(2-carboxyacetamido)propanamido)benzoic acid and 3-((1-((2-carbamoylphenyl)amino)-1-oxopropan-2-yl)amino)-3-oxopropanoic acid, respectively. ChyD is an amidase, being responsible for the amidation of the carboxylic acid moiety of 2-(2-aminopropanamido)benzoic acid, 2-(2-(2-carboxyacetamido)propanamido)benzoic acid and 2-(2-((4-amino-1-carboxy-4-oxobutyl)amino)propanamido)benzoic acid. ChyC is involved in the same reactions as ChyD, but plays a more minor role in the amidation reactions compared to chyD. The oxidoreductases chyH and chyM are involved in oxidation reactions that form N-pyruvoylanthranilamide from 2-(2-aminopropanamido)benzamidine and (1-((2-carbamoylphenyl)amino)-1-oxopropan-2-yl)glutamine, respectively. N-pyruvoylanthranilamide is further converted via two further branches in the pathway, yielding chrysogine and additional chrysogine-related coumpounds. Chrysogine is likely formed by a spontaneous ring closure from N-pyruvoylanthranilamide. The polypeptide is Glutamine amidotransferase-like protein chyE (Penicillium rubens (strain ATCC 28089 / DSM 1075 / NRRL 1951 / Wisconsin 54-1255) (Penicillium chrysogenum)).